A 532-amino-acid polypeptide reads, in one-letter code: Glucose-6-phosphate isomerase (532 aa).

Residue E322 is the Proton donor of the active site. Residues H351 and K457 contribute to the active site.

The protein belongs to the GPI family.

It localises to the cytoplasm. It catalyses the reaction alpha-D-glucose 6-phosphate = beta-D-fructose 6-phosphate. The protein operates within carbohydrate biosynthesis; gluconeogenesis. Its pathway is carbohydrate degradation; glycolysis; D-glyceraldehyde 3-phosphate and glycerone phosphate from D-glucose: step 2/4. In terms of biological role, catalyzes the reversible isomerization of glucose-6-phosphate to fructose-6-phosphate. This chain is Glucose-6-phosphate isomerase, found in Synechococcus sp. (strain JA-2-3B'a(2-13)) (Cyanobacteria bacterium Yellowstone B-Prime).